The chain runs to 253 residues: Ribonuclease 3 (253 aa).

The RNase III domain occupies 29–157; that stretch reads VDELQKTIGH…MLGAVFLDAG (129 aa). Residue glutamate 70 participates in Mg(2+) binding. Aspartate 74 is an active-site residue. Mg(2+) is bound by residues aspartate 143 and glutamate 146. Residue glutamate 146 is part of the active site. The DRBM domain maps to 184-253; it reads DYKSQLQELT…AARAVATLDK (70 aa).

The protein belongs to the ribonuclease III family. As to quaternary structure, homodimer. Requires Mg(2+) as cofactor.

It is found in the cytoplasm. It carries out the reaction Endonucleolytic cleavage to 5'-phosphomonoester.. Functionally, digests double-stranded RNA. Involved in the processing of primary rRNA transcript to yield the immediate precursors to the large and small rRNAs (23S and 16S). Processes some mRNAs, and tRNAs when they are encoded in the rRNA operon. Processes pre-crRNA and tracrRNA of type II CRISPR loci if present in the organism. The chain is Ribonuclease 3 from Nitratidesulfovibrio vulgaris (strain ATCC 29579 / DSM 644 / CCUG 34227 / NCIMB 8303 / VKM B-1760 / Hildenborough) (Desulfovibrio vulgaris).